A 651-amino-acid polypeptide reads, in one-letter code: LEAF RUST 10 DISEASE-RESISTANCE LOCUS RECEPTOR-LIKE PROTEIN KINASE-like 1.2 (651 aa).

The first 26 residues, 1 to 26, serve as a signal peptide directing secretion; it reads MNPSTPSLLYTSIFFYFTIIATQTLS. Over 27 to 264 the chain is Extracellular; the sequence is LDPKFKACEP…NDKRRRVIVK (238 aa). Residues Asn-88, Asn-114, Asn-130, Asn-136, Asn-155, Asn-193, and Asn-213 are each glycosylated (N-linked (GlcNAc...) asparagine). The helical transmembrane segment at 265-285 threads the bilayer; the sequence is VLIGASAAVVGLIAASIFWYV. Over 286 to 651 the chain is Cytoplasmic; it reads YHRRKTKSYR…DSVIVKWDSK (366 aa). The Protein kinase domain occupies 341 to 613; the sequence is FDPSKELGDG…PCMSHVQDTL (273 aa). Residues 347-355 and Lys-369 each bind ATP; that span reads LGDGGFGTV. At Tyr-415 the chain carries Phosphotyrosine. Catalysis depends on Asp-465, which acts as the Proton acceptor. The residue at position 498 (Ser-498) is a Phosphoserine. Phosphothreonine is present on residues Thr-499 and Thr-504. A Phosphotyrosine modification is found at Tyr-512.

Belongs to the protein kinase superfamily. Ser/Thr protein kinase family.

It localises to the cell membrane. The protein resides in the membrane. It catalyses the reaction L-seryl-[protein] + ATP = O-phospho-L-seryl-[protein] + ADP + H(+). It carries out the reaction L-threonyl-[protein] + ATP = O-phospho-L-threonyl-[protein] + ADP + H(+). In terms of biological role, probable receptor-like serine/threonine-protein kinase involved in abscisic acid (ABA) signaling. Acts as a positive regulator of abiotic stress response. This chain is LEAF RUST 10 DISEASE-RESISTANCE LOCUS RECEPTOR-LIKE PROTEIN KINASE-like 1.2, found in Arabidopsis thaliana (Mouse-ear cress).